A 380-amino-acid chain; its full sequence is O-phospho-L-seryl-tRNA:Cys-tRNA synthase (380 aa).

Pyridoxal 5'-phosphate is bound by residues 86 to 87 (AR), Asn192, and 215 to 217 (SGH). N6-(pyridoxal phosphate)lysine is present on Lys218.

The protein belongs to the SepCysS family. Homodimer. Interacts with SepRS. Requires pyridoxal 5'-phosphate as cofactor.

The catalysed reaction is O-phospho-L-seryl-tRNA(Cys) + hydrogen sulfide + H(+) = L-cysteinyl-tRNA(Cys) + phosphate. Converts O-phospho-L-seryl-tRNA(Cys) (Sep-tRNA(Cys)) to L-cysteinyl-tRNA(Cys) (Cys-tRNA(Cys)). This chain is O-phospho-L-seryl-tRNA:Cys-tRNA synthase, found in Methanococcus maripaludis (strain C7 / ATCC BAA-1331).